The sequence spans 456 residues: ATP-dependent protease ATPase subunit HslU (456 aa).

ATP contacts are provided by residues isoleucine 18, 60-65 (GVGKTE), aspartate 270, glutamate 334, and arginine 406.

It belongs to the ClpX chaperone family. HslU subfamily. As to quaternary structure, a double ring-shaped homohexamer of HslV is capped on each side by a ring-shaped HslU homohexamer. The assembly of the HslU/HslV complex is dependent on binding of ATP.

It localises to the cytoplasm. ATPase subunit of a proteasome-like degradation complex; this subunit has chaperone activity. The binding of ATP and its subsequent hydrolysis by HslU are essential for unfolding of protein substrates subsequently hydrolyzed by HslV. HslU recognizes the N-terminal part of its protein substrates and unfolds these before they are guided to HslV for hydrolysis. In Exiguobacterium sibiricum (strain DSM 17290 / CCUG 55495 / CIP 109462 / JCM 13490 / 255-15), this protein is ATP-dependent protease ATPase subunit HslU.